We begin with the raw amino-acid sequence, 481 residues long: (S)-N-methylcoclaurine 3'-hydroxylase isozyme 1 (481 aa).

Cys423 lines the heme pocket.

This sequence belongs to the cytochrome P450 family. Heme is required as a cofactor. As to expression, restricted to the parietal region of sieve elements adjacent or proximal to laticifers in roots, stems, leaves, carpels and hypocotyls.

Its subcellular location is the endoplasmic reticulum. It catalyses the reaction (S)-N-methylcoclaurine + reduced [NADPH--hemoprotein reductase] + O2 = (S)-3'-hydroxy-N-methylcoclaurine + oxidized [NADPH--hemoprotein reductase] + H2O + H(+). It participates in alkaloid biosynthesis; (S)-reticuline biosynthesis; (S)-reticuline from (S)-norcoclaurine: step 3/4. Functionally, cytochrome P450 monooxygenase involved in the biosynthesis of benzylisoquinoline alkaloids. Catalyzes the 3'-hydroxylation of (S)-N-methylcoclaurine. The protein is (S)-N-methylcoclaurine 3'-hydroxylase isozyme 1 of Papaver somniferum (Opium poppy).